We begin with the raw amino-acid sequence, 511 residues long: Maturase K (511 aa).

This sequence belongs to the intron maturase 2 family. MatK subfamily.

The protein localises to the plastid. Its subcellular location is the chloroplast. Its function is as follows. Usually encoded in the trnK tRNA gene intron. Probably assists in splicing its own and other chloroplast group II introns. This chain is Maturase K, found in Hordeum jubatum (Foxtail barley).